A 505-amino-acid polypeptide reads, in one-letter code: MIDQETDGIEKLETGIPGFDFLSDGGLPLGRATLIAGTAGSAKTIFASQFLVEGIQRGENGVFVTFEEPPKALRKNMRGFGWDIQQWENEGKWVFVDASPQPGDRPIVSGEYDLGALIARIEHAVRKYKASRISLDSLGAIFSHLSDSAQVRSDLFRLASALRELGVTAIMTAERVEEYGEISRYGVEEFVADNVVIVRNVLADEKRRRTIEILKYRGTDHQKGEFPFTIINKKGIVIIPLSAIELEQKSSDIRITSGSEELDRMCGSGFFRDSIILVSGATGTGKTLMVTEFMDGGVANGERCLVFAFEESREQLIRNATGWGVDFKQMEKEGKLKVVCRYPETTNLENHLIMMKDIIQEFKPNRVAVDSLSALERVSTLKSFREFIIGLTSFIKQQEIGGLFTSTTPNLLGGASITDAHISTITDSIILLRYVEMYGEMRRGITVLKMRGSMHDKDIREFSIDHQGMHIGKPFRNVTGILAGTPMYTAQSEVERLSGLFDEKI.

KaiC domains follow at residues Glu10 to Asp252 and Ile253 to Thr485. Position 423 is a phosphoserine; by autocatalysis (Ser423). Thr424 carries the post-translational modification Phosphothreonine; by autocatalysis.

The protein belongs to the KaiC family. Multimerizes, probably forming homohexamers, no interaction with KaiC1 or KaiC2 is seen. In another study forms hexamers, interacts with KaiB1, KaiB3, and KaiC1. Post-translationally, autophosphorylates and dephosphorylates. Dephosphorylation of KaiC3 was higher at 25 than at 30 or 35 degrees Celsius.

It carries out the reaction L-seryl-[protein] + ATP = O-phospho-L-seryl-[protein] + ADP + H(+). It catalyses the reaction L-threonyl-[protein] + ATP = O-phospho-L-threonyl-[protein] + ADP + H(+). The catalysed reaction is ATP + H2O = ADP + phosphate + H(+). Its activity is regulated as follows. ATPase activity is influenced by KaiB1 and KaiB3 in vitro; ATPase is reduced 35% by the KaiB1 tetramer and 55% by the KaiB3 monomer but not affected by KaiA or the KaiB3 tetramer. Seems to be linked to dark adaption of Synechocystis cells, but is not as essential as the core oscillator KaiAB1C1 for the circadian cycle. KaiB3 and KaiC3 may cross talk with the core oscillator. Autophosphorylates and dephosphorylates independently of KaiA. Has a weak ATPase, hydrolyzes 8.5 ATP/monomer/day, has no detectable ATP synthesis activity. ATPase activity reduced 55% by KaiB3 monomer but not the KaiB3 tetramer or KaiA in vitro, reduced 35% by KaiB1 tetramer. This chain is Circadian clock protein KaiC3, found in Synechocystis sp. (strain ATCC 27184 / PCC 6803 / Kazusa).